A 148-amino-acid chain; its full sequence is 3-dehydroquinate dehydratase (148 aa).

Catalysis depends on Tyr-24, which acts as the Proton acceptor. Substrate is bound by residues Asn-75, His-81, and Asp-88. His-101 serves as the catalytic Proton donor. Residues 102-103 and Arg-112 each bind substrate; that span reads LS.

Belongs to the type-II 3-dehydroquinase family. Homododecamer.

The enzyme catalyses 3-dehydroquinate = 3-dehydroshikimate + H2O. The protein operates within metabolic intermediate biosynthesis; chorismate biosynthesis; chorismate from D-erythrose 4-phosphate and phosphoenolpyruvate: step 3/7. In terms of biological role, catalyzes a trans-dehydration via an enolate intermediate. The polypeptide is 3-dehydroquinate dehydratase (Bartonella henselae (strain ATCC 49882 / DSM 28221 / CCUG 30454 / Houston 1) (Rochalimaea henselae)).